Reading from the N-terminus, the 435-residue chain is D-aminoacyl-tRNA deacylase (435 aa).

This sequence belongs to the DtdA deacylase family. In terms of assembly, monomer. Zn(2+) is required as a cofactor.

The enzyme catalyses a D-aminoacyl-tRNA + H2O = a tRNA + a D-alpha-amino acid + H(+). It catalyses the reaction glycyl-tRNA(Ala) + H2O = tRNA(Ala) + glycine + H(+). Functionally, D-aminoacyl-tRNA deacylase with broad substrate specificity. By recycling D-aminoacyl-tRNA to D-amino acids and free tRNA molecules, this enzyme counteracts the toxicity associated with the formation of D-aminoacyl-tRNA entities in vivo. This chain is D-aminoacyl-tRNA deacylase, found in Methanosphaerula palustris (strain ATCC BAA-1556 / DSM 19958 / E1-9c).